The chain runs to 427 residues: Mitogen-activated protein kinase HOG1 (427 aa).

Positions 23-302 constitute a Protein kinase domain; it reads YTDLNPVGMG…AADALVHPYL (280 aa). ATP-binding positions include 29-37 and Lys-52; that span reads VGMGAFGLV. Catalysis depends on Asp-144, which acts as the Proton acceptor. Phosphothreonine is present on Thr-174. The short motif at 174–176 is the TXY element; sequence TGY. Tyr-176 bears the Phosphotyrosine mark. Low complexity predominate over residues 380-400; it reads QAQAHSNSSNSNSSSNVNSKS. Residues 380–409 are disordered; the sequence is QAQAHSNSSNSNSSSNVNSKSKAARDSAND.

Belongs to the protein kinase superfamily. Ser/Thr protein kinase family. MAP kinase subfamily. HOG1 sub-subfamily. Mg(2+) serves as cofactor. Dually phosphorylated on Thr-174 and Tyr-176, which activates the enzyme. Phosphorylated during osmotic stress.

It is found in the cytoplasm. The protein localises to the nucleus. The enzyme catalyses L-seryl-[protein] + ATP = O-phospho-L-seryl-[protein] + ADP + H(+). The catalysed reaction is L-threonyl-[protein] + ATP = O-phospho-L-threonyl-[protein] + ADP + H(+). Activated by tyrosine and threonine phosphorylation. Proline-directed serine/threonine-protein kinase involved in a signal transduction pathway that is activated by changes in the osmolarity of the extracellular environment. Controls osmotic regulation of transcription of target genes. Involved in resistance to osmotic stress and tolerance to methylglyoxal and citric acid. In Torulaspora delbrueckii (Yeast), this protein is Mitogen-activated protein kinase HOG1 (HOG1).